Reading from the N-terminus, the 490-residue chain is Bifunctional dihydrocamalexate synthase/camalexin synthase (490 aa).

A helical transmembrane segment spans residues 1 to 21; the sequence is MSVFLCFLVLLPLILIFLNVL.

This sequence belongs to the cytochrome P450 family.

It is found in the membrane. It carries out the reaction 2-(L-cystein-S-yl)-2-(1H-indol-3-yl)-acetonitrile + 2 reduced [NADPH--hemoprotein reductase] + 2 O2 = camalexin + hydrogen cyanide + 2 oxidized [NADPH--hemoprotein reductase] + CO2 + 4 H2O + 2 H(+). It catalyses the reaction 2-(L-cystein-S-yl)-2-(1H-indol-3-yl)-acetonitrile + reduced [NADPH--hemoprotein reductase] + O2 = (R)-dihydrocamalexate + hydrogen cyanide + oxidized [NADPH--hemoprotein reductase] + 2 H2O + 2 H(+). The catalysed reaction is (R)-dihydrocamalexate + reduced [NADPH--hemoprotein reductase] + O2 = camalexin + oxidized [NADPH--hemoprotein reductase] + CO2 + 2 H2O. Multifunctional enzyme involved in the biosynthesis of the indole-derived phytoalexin camalexin. Catalyzes two reactions, the formation of dihydrocamalexate from indole-3-acetonitrile-cysteine conjugate and the oxidative decarboxylation of dihydrocamalexate which is the final step in camalexin biosynthesis. Required for the resistance to the fungal pathogens A.brassicicola, B.cinerea, B.elliptica, B.tulipae, L.maculans and Colletotrichum higginsianum. Seems not to be required for resistance to P.syringae, P.porri, and not involved in age-related resistance. The sequence is that of Bifunctional dihydrocamalexate synthase/camalexin synthase (CYP71B15) from Arabidopsis thaliana (Mouse-ear cress).